A 477-amino-acid polypeptide reads, in one-letter code: Ribulose bisphosphate carboxylase large chain (477 aa).

Residues M1 to S2 constitute a propeptide that is removed on maturation. The residue at position 3 (P3) is an N-acetylproline. K14 carries the post-translational modification N6,N6,N6-trimethyllysine. 2 residues coordinate substrate: N123 and T173. K175 functions as the Proton acceptor in the catalytic mechanism. K177 provides a ligand contact to substrate. The Mg(2+) site is built by K201, D203, and E204. Position 201 is an N6-carboxylysine (K201). H294 functions as the Proton acceptor in the catalytic mechanism. The substrate site is built by R295, H327, and S379.

Belongs to the RuBisCO large chain family. Type I subfamily. As to quaternary structure, heterohexadecamer of 8 large chains and 8 small chains; disulfide-linked. The disulfide link is formed within the large subunit homodimers. It depends on Mg(2+) as a cofactor. In terms of processing, the disulfide bond which can form in the large chain dimeric partners within the hexadecamer appears to be associated with oxidative stress and protein turnover.

It localises to the plastid. It carries out the reaction 2 (2R)-3-phosphoglycerate + 2 H(+) = D-ribulose 1,5-bisphosphate + CO2 + H2O. The catalysed reaction is D-ribulose 1,5-bisphosphate + O2 = 2-phosphoglycolate + (2R)-3-phosphoglycerate + 2 H(+). In terms of biological role, ruBisCO catalyzes two reactions: the carboxylation of D-ribulose 1,5-bisphosphate, the primary event in carbon dioxide fixation, as well as the oxidative fragmentation of the pentose substrate in the photorespiration process. Both reactions occur simultaneously and in competition at the same active site. In Lathraea clandestina (Purple toothwort), this protein is Ribulose bisphosphate carboxylase large chain (rbcL).